Reading from the N-terminus, the 220-residue chain is 7-cyano-7-deazaguanine synthase (220 aa).

Residue 10-20 (FSGGQDSTTCL) participates in ATP binding. Zn(2+) is bound by residues C188, C197, C200, and C203.

Belongs to the QueC family. Zn(2+) serves as cofactor.

It carries out the reaction 7-carboxy-7-deazaguanine + NH4(+) + ATP = 7-cyano-7-deazaguanine + ADP + phosphate + H2O + H(+). Its pathway is purine metabolism; 7-cyano-7-deazaguanine biosynthesis. Its function is as follows. Catalyzes the ATP-dependent conversion of 7-carboxy-7-deazaguanine (CDG) to 7-cyano-7-deazaguanine (preQ(0)). The protein is 7-cyano-7-deazaguanine synthase of Neisseria meningitidis serogroup C (strain 053442).